Consider the following 170-residue polypeptide: Shikimate kinase (170 aa).

Residue 11 to 16 (GAGKTT) coordinates ATP. Residue Thr15 coordinates Mg(2+). Asp33, Arg57, and Gly80 together coordinate substrate. Arg119 lines the ATP pocket. Residue Arg141 participates in substrate binding.

This sequence belongs to the shikimate kinase family. Monomer. It depends on Mg(2+) as a cofactor.

It is found in the cytoplasm. The catalysed reaction is shikimate + ATP = 3-phosphoshikimate + ADP + H(+). It participates in metabolic intermediate biosynthesis; chorismate biosynthesis; chorismate from D-erythrose 4-phosphate and phosphoenolpyruvate: step 5/7. Functionally, catalyzes the specific phosphorylation of the 3-hydroxyl group of shikimic acid using ATP as a cosubstrate. In Azobacteroides pseudotrichonymphae genomovar. CFP2, this protein is Shikimate kinase.